The sequence spans 304 residues: Coenzyme PQQ synthesis protein B (304 aa).

This sequence belongs to the PqqB family.

Its pathway is cofactor biosynthesis; pyrroloquinoline quinone biosynthesis. May be involved in the transport of PQQ or its precursor to the periplasm. The protein is Coenzyme PQQ synthesis protein B of Pseudomonas aeruginosa (strain LESB58).